The chain runs to 183 residues: MPDIRPHYFIGVPIPEGIANPIYQAAKNEPILTFQKWVHPLDYHITLIFLGAADETQIKKLEGSLAEIASEIDPFSIKFGKIDVFGDRRKPRVLHLEPKKNKTLDRLREHTKQAVLQAGFQVEKRPYHPHMTLARKWTGEDGFPAHVPFESGEVSMMAERFSLFQIHLNQSPKYEEIFKFQLS.

The Proton donor role is filled by H44. 2 short sequence motifs (HXTX) span residues 44-47 (HITL) and 130-133 (HMTL). Catalysis depends on H130, which acts as the Proton acceptor.

The protein belongs to the 2H phosphoesterase superfamily. ThpR family.

It catalyses the reaction a 3'-end 2',3'-cyclophospho-ribonucleotide-RNA + H2O = a 3'-end 2'-phospho-ribonucleotide-RNA + H(+). Functionally, hydrolyzes RNA 2',3'-cyclic phosphodiester to an RNA 2'-phosphomonoester. The polypeptide is RNA 2',3'-cyclic phosphodiesterase (ytlP) (Bacillus subtilis (strain 168)).